The chain runs to 430 residues: Ribosomal protein uS12 methylthiotransferase RimO (430 aa).

Residues 1–116 (MRVGIKVLGC…IANAIENGTD (116 aa)) form the MTTase N-terminal domain. Residues C10, C46, C79, C148, C152, and C155 each coordinate [4Fe-4S] cluster. Residues 134 to 365 (LEERPYAYVK…LLQAEISNSR (232 aa)) enclose the Radical SAM core domain. A TRAM domain is found at 367-430 (DRFVGKKLKF…DEYDMWGSVI (64 aa)).

It belongs to the methylthiotransferase family. RimO subfamily. [4Fe-4S] cluster serves as cofactor.

The protein resides in the cytoplasm. The enzyme catalyses L-aspartate(89)-[ribosomal protein uS12]-hydrogen + (sulfur carrier)-SH + AH2 + 2 S-adenosyl-L-methionine = 3-methylsulfanyl-L-aspartate(89)-[ribosomal protein uS12]-hydrogen + (sulfur carrier)-H + 5'-deoxyadenosine + L-methionine + A + S-adenosyl-L-homocysteine + 2 H(+). Its function is as follows. Catalyzes the methylthiolation of an aspartic acid residue of ribosomal protein uS12. This Thermotoga petrophila (strain ATCC BAA-488 / DSM 13995 / JCM 10881 / RKU-1) protein is Ribosomal protein uS12 methylthiotransferase RimO.